A 917-amino-acid polypeptide reads, in one-letter code: Coiled-coil domain-containing protein 186 (917 aa).

Disordered stretches follow at residues 1 to 52 (MKIR…SGDE), 97 to 118 (SCANTDTCPEDSGQIDDFPGGD), and 701 to 769 (TQRR…SVAV). Positions 33–44 (TTEKTSELRDDS) are enriched in basic and acidic residues. The stretch at 220–736 (RYLQQELTVK…TENGNHDKDI (517 aa)) forms a coiled coil. Residues 722-736 (RKLEQTENGNHDKDI) show a composition bias toward basic and acidic residues. Over residues 737-748 (SSMGSRSSSSGS) the composition is skewed to low complexity. Ser759 bears the Phosphoserine mark. Coiled coils occupy residues 778-822 (AMLI…IQSY) and 874-913 (KLQAVLEDTLLKNITLKENLQTLGTEIERLIKHQHELEQR).

In terms of tissue distribution, expressed in postnatal germ cells.

The chain is Coiled-coil domain-containing protein 186 (Ccdc186) from Mus musculus (Mouse).